The chain runs to 393 residues: Protein TsgA (393 aa).

12 consecutive transmembrane segments (helical) span residues 11–31 (WISF…GMVM), 51–71 (FLNA…EIVP), 78–98 (FGFI…SLAL), 101–121 (AAMF…TFLI), 134–154 (LLFT…VAAF), 162–182 (WYWV…LTFG), 206–226 (IGVL…LGFI), 245–265 (ALVS…SFIL), 273–293 (ILTV…TGTQ), 298–318 (WFIL…ITLG), 332–352 (FILT…GPIV), and 361–381 (LLTA…LGFV).

The protein belongs to the major facilitator superfamily. TsgA family.

It localises to the cell inner membrane. In Salmonella dublin (strain CT_02021853), this protein is Protein TsgA.